The sequence spans 1249 residues: Fanconi anemia group J protein (1249 aa).

The Helicase ATP-binding domain occupies 11-442 (GGVKIYFPYK…KDHEPLRAVC (432 aa)). Positions 102–127 (QGTSRHFNYPSTPPSERNGTSSTCQD) are enriched in polar residues. Positions 102–131 (QGTSRHFNYPSTPPSERNGTSSTCQDSPEK) are disordered. The Nuclear localization signal signature appears at 158 to 175 (KKRIRPLETTQQIRKRHC). Residue 185–192 (AKVDSGKT) coordinates ATP. Positions 283, 298, 310, and 350 each coordinate [4Fe-4S] cluster. A DEAH box motif is present at residues 393 to 396 (DEAH). Residues serine 505, serine 927, serine 930, serine 956, serine 990, serine 1004, and serine 1032 each carry the phosphoserine modification. The segment at 888 to 1063 (HQKVLNVSIK…ESSNLTVNTS (176 aa)) is interaction with BRCA1. Disordered regions lie at residues 1018-1042 (KATP…EKME) and 1108-1127 (VSEE…EAED). Over residues 1023–1032 (LGSSENSASS) the composition is skewed to polar residues. A compositionally biased stretch (basic and acidic residues) spans 1110-1122 (EEDKQSTSNRDFE). Serine 1237 is modified (phosphoserine). An N6-acetyllysine modification is found at lysine 1249.

The protein belongs to the DEAD box helicase family. DEAH subfamily. As to quaternary structure, interacts with the replication protein A complex (RPA) via the RPA1 subunit; following DNA damage they colocalize in foci in the nucleus. Binds directly to the BRCT domains of BRCA1. Interacts with the CIA complex components CIAO1, CIAO2B and MMS19. [4Fe-4S] cluster serves as cofactor. In terms of processing, phosphorylated. Phosphorylation is necessary for interaction with BRCA1, and is cell-cycle regulated. Post-translationally, acetylation at Lys-1249 facilitates DNA end processing required for repair and checkpoint signaling. In terms of tissue distribution, ubiquitously expressed, with highest levels in testis.

The protein localises to the nucleus. It localises to the cytoplasm. The enzyme catalyses Couples ATP hydrolysis with the unwinding of duplex DNA at the replication fork by translocating in the 5'-3' direction. This creates two antiparallel DNA single strands (ssDNA). The leading ssDNA polymer is the template for DNA polymerase III holoenzyme which synthesizes a continuous strand.. The catalysed reaction is ATP + H2O = ADP + phosphate + H(+). Helicase activity on forked substrates is stimulated by replication protein A complex heterotrimer (RPA1, RPA2, RPA3). Helicase activity on G-quadruplex DNA is stimulated 3-fold by RPA, and inhibited by MSH2/MSH6. Unwinding of G-quadruplex DNA is inhibited by ATP-gamma-S and telomestatin (TMS); TMA does not inhibit unwinding of forked-duplex DNA. Helicase activity on dsDNA and G-quadruplex DNA is inhibited by porphyrin derivatives meso-tetra (N-methyl-4-pyridyl) porphine tetra tosylate (T4) and N-methyl mesoporphyrin IX (NMM). In terms of biological role, DNA-dependent ATPase and 5'-3' DNA helicase required for the maintenance of chromosomal stability. Acts late in the Fanconi anemia pathway, after FANCD2 ubiquitination. Involved in the repair of DNA double-strand breaks by homologous recombination in a manner that depends on its association with BRCA1. Involved in the repair of abasic sites at replication forks by promoting the degradation of DNA-protein cross-links: acts by catalyzing unfolding of HMCES DNA-protein cross-link via its helicase activity, exposing the underlying DNA and enabling cleavage of the DNA-protein adduct by the SPRTN metalloprotease. Can unwind RNA:DNA substrates. Unwinds G-quadruplex DNA; unwinding requires a 5'-single stranded tail. In Homo sapiens (Human), this protein is Fanconi anemia group J protein.